A 101-amino-acid polypeptide reads, in one-letter code: Early E3A 11.6 kDa glycoprotein (101 aa).

Asparagine 14 carries N-linked (GlcNAc...) asparagine; by host glycosylation. The helical transmembrane segment at 41-62 (MWWFSIALMFVCLIIMWLICCL) threads the bilayer.

The protein belongs to the adenoviridae E3A-1 family. In terms of processing, N-glycosylated and probably also O-glycosylated.

The protein resides in the host nucleus membrane. In Human adenovirus C serotype 6 (HAdV-6), this protein is Early E3A 11.6 kDa glycoprotein.